Reading from the N-terminus, the 264-residue chain is Movement protein (264 aa).

A disordered region spans residues 211–264 (RTKSSKRGPKNNNNLGKGRSGGRPKPKSFDEVEKEFDNLIEDEAETSVADSDSY). Basic and acidic residues predominate over residues 237–247 (KSFDEVEKEFD).

It belongs to the tobamovirus movement protein family. Binds to host RBCS at the plasmodesmata; this interaction seems required for viral systemic movement. In resistant plants, interacts with host MBP2C at host microtubules; this interaction prevents virus cell to cell movement. In resistant plants, interacts with host resistance (R) protein (e.g. tomato ToMV resistance protein TM-2(2), AC Q71BG9) at the host plasma membrane; this interaction triggers host defense responses leading to programmed cell death.

It is found in the host cytoplasm. The protein resides in the host cytoskeleton. Its subcellular location is the host cell junction. It localises to the host plasmodesma. Functionally, transports viral genome to neighboring plant cells directly through plasmosdesmata, without any budding. The movement protein allows efficient cell to cell propagation, by bypassing the host cell wall barrier. Forms a ribonucleoprotein complex with viral RNA. Binds microtubules and modulates microtubule stability. Can bind double-stranded DNA. Triggers host hypersensitive defense reaction in incompatible plants harboring resistance (R) proteins. The protein is Movement protein (MP) of Antirrhinum majus (Garden snapdragon).